Here is a 275-residue protein sequence, read N- to C-terminus: Elongation factor Ts (275 aa).

The segment at 76 to 79 (TDFV) is involved in Mg(2+) ion dislocation from EF-Tu.

The protein belongs to the EF-Ts family.

Its subcellular location is the cytoplasm. Its function is as follows. Associates with the EF-Tu.GDP complex and induces the exchange of GDP to GTP. It remains bound to the aminoacyl-tRNA.EF-Tu.GTP complex up to the GTP hydrolysis stage on the ribosome. The sequence is that of Elongation factor Ts from Corynebacterium glutamicum (strain ATCC 13032 / DSM 20300 / JCM 1318 / BCRC 11384 / CCUG 27702 / LMG 3730 / NBRC 12168 / NCIMB 10025 / NRRL B-2784 / 534).